Reading from the N-terminus, the 224-residue chain is Ribonuclease HII (224 aa).

The 219-residue stretch at Met1–Lys219 folds into the RNase H type-2 domain. Residues Asp7, Glu8, and Asp105 each coordinate a divalent metal cation.

This sequence belongs to the RNase HII family. The cofactor is Mn(2+). Mg(2+) serves as cofactor.

Its subcellular location is the cytoplasm. The catalysed reaction is Endonucleolytic cleavage to 5'-phosphomonoester.. Its function is as follows. Endonuclease that specifically degrades the RNA of RNA-DNA hybrids. This is Ribonuclease HII from Methanosarcina barkeri (strain Fusaro / DSM 804).